The following is a 292-amino-acid chain: Proteasome subunit beta 2 (292 aa).

A propeptide spans Met1–Gly59 (removed in mature form; by autocatalysis). The active-site Nucleophile is Thr60.

It belongs to the peptidase T1B family. In terms of assembly, the 20S proteasome core is composed of 14 alpha and 14 beta subunits that assemble into four stacked heptameric rings, resulting in a barrel-shaped structure. The two inner rings, each composed of seven catalytic beta subunits, are sandwiched by two outer rings, each composed of seven alpha subunits. All four combinations of alpha- and beta-subunits (beta2-alpha1, beta2-alpha2, beta1-alpha2 and beta1-alpha1) yield fully assembled and proteolytically active proteasomes. The catalytic chamber with the active sites is on the inside of the barrel. Has probably a gated structure, the ends of the cylinder being occluded by the N-termini of the alpha-subunits. Is likely capped by the proteasome-associated ATPase, ARC.

The protein resides in the cytoplasm. It catalyses the reaction Cleavage of peptide bonds with very broad specificity.. Its pathway is protein degradation; proteasomal Pup-dependent pathway. The formation of the proteasomal ATPase ARC-20S proteasome complex, likely via the docking of the C-termini of ARC into the intersubunit pockets in the alpha-rings, may trigger opening of the gate for substrate entry. Interconversion between the open-gate and close-gate conformations leads to a dynamic regulation of the 20S proteasome proteolysis activity. In terms of biological role, component of the proteasome core, a large protease complex with broad specificity involved in protein degradation. The R.erythropolis proteasomes are able to cleave oligopeptides after Tyr, Phe and Leu, very poorly after Arg but not after Glu. Thus, displays chymotrypsin-like activity, low trypsin-like activity but no caspase-like activity. This Rhodococcus erythropolis (Arthrobacter picolinophilus) protein is Proteasome subunit beta 2.